The following is a 122-amino-acid chain: Ribosome-binding factor A (122 aa).

The protein belongs to the RbfA family. Monomer. Binds 30S ribosomal subunits, but not 50S ribosomal subunits or 70S ribosomes.

The protein localises to the cytoplasm. One of several proteins that assist in the late maturation steps of the functional core of the 30S ribosomal subunit. Associates with free 30S ribosomal subunits (but not with 30S subunits that are part of 70S ribosomes or polysomes). Required for efficient processing of 16S rRNA. May interact with the 5'-terminal helix region of 16S rRNA. This chain is Ribosome-binding factor A, found in Cupriavidus pinatubonensis (strain JMP 134 / LMG 1197) (Cupriavidus necator (strain JMP 134)).